The primary structure comprises 146 residues: MTLTKGSFTYSSGEEYRGEWKEGRRHGFGQLMFADGGTYLGHFENGLFNGFGVLTFSDGSRYEGEFSQGKFNGVGVFIRYDNMTFEGEFKNGRVDGFGLLTFPDGSHGLPRNEGLFENNKLLRREKCSAVVQRAQSASKSARNLTA.

MORN repeat units follow at residues 16–38 (YRGE…DGGT), 39–61 (YLGH…DGSR), 62–84 (YEGE…DNMT), and 85–107 (FEGE…DGSH).

As to quaternary structure, interacts with MYO3A.

The protein localises to the cytoplasm. It localises to the cell projection. It is found in the filopodium tip. The protein resides in the stereocilium. Plays a role in promoting axonal degeneration following neuronal injury by toxic insult or trauma. This is MORN repeat-containing protein 4 (Morn4) from Rattus norvegicus (Rat).